The following is a 233-amino-acid chain: 2,3-bisphosphoglycerate-dependent phosphoglycerate mutase (233 aa).

Residues 8 to 15 (RHGESEWN), 21 to 22 (TG), Arg-60, 87 to 90 (ERHY), Lys-98, 114 to 115 (RR), and 183 to 184 (GN) each bind substrate. The active-site Tele-phosphohistidine intermediate is the His-9. The active-site Proton donor/acceptor is the Glu-87.

The protein belongs to the phosphoglycerate mutase family. BPG-dependent PGAM subfamily.

The catalysed reaction is (2R)-2-phosphoglycerate = (2R)-3-phosphoglycerate. It functions in the pathway carbohydrate degradation; glycolysis; pyruvate from D-glyceraldehyde 3-phosphate: step 3/5. In terms of biological role, catalyzes the interconversion of 2-phosphoglycerate and 3-phosphoglycerate. This chain is 2,3-bisphosphoglycerate-dependent phosphoglycerate mutase, found in Lactococcus lactis subsp. cremoris (strain MG1363).